A 159-amino-acid polypeptide reads, in one-letter code: Cyclic pyranopterin monophosphate synthase (159 aa).

Residues 75–77 (LCH) and 113–114 (ME) each bind substrate. Residue aspartate 128 is part of the active site.

It belongs to the MoaC family. Homohexamer; trimer of dimers.

It catalyses the reaction (8S)-3',8-cyclo-7,8-dihydroguanosine 5'-triphosphate = cyclic pyranopterin phosphate + diphosphate. It functions in the pathway cofactor biosynthesis; molybdopterin biosynthesis. Its function is as follows. Catalyzes the conversion of (8S)-3',8-cyclo-7,8-dihydroguanosine 5'-triphosphate to cyclic pyranopterin monophosphate (cPMP). The sequence is that of Cyclic pyranopterin monophosphate synthase from Aliivibrio fischeri (strain MJ11) (Vibrio fischeri).